The chain runs to 119 residues: Autophagy-related protein 8B (119 aa).

A lipid anchor (Phosphatidylethanolamine amidated glycine) is attached at Gly-117. The propeptide at 118–119 is removed in mature form; it reads LL.

Belongs to the ATG8 family. In terms of assembly, interacts with ATG4. In terms of processing, the C-terminal 2 residues are removed by ATG4 to expose Gly-117 at the C-terminus. The C-terminal Gly is then amidated with phosphatidylethanolamine by an activating system similar to that for ubiquitin.

The protein localises to the cytoplasmic vesicle. The protein resides in the autophagosome membrane. Its subcellular location is the vacuole membrane. It is found in the cytoplasm. It localises to the cytoskeleton. Its function is as follows. Ubiquitin-like modifier involved in autophagosomes formation. May mediate the delivery of the autophagosomes to the vacuole via the microtubule cytoskeleton. The polypeptide is Autophagy-related protein 8B (ATG8B) (Oryza sativa subsp. indica (Rice)).